Here is a 377-residue protein sequence, read N- to C-terminus: Circumsporozoite protein (377 aa).

A signal peptide spans Met1–Cys22. Positions His51–Glu294 are disordered. Residues Asp72–Asp100 are compositionally biased toward basic and acidic residues. Residues Lys80–Arg88 form a required for the binding to heparan sulfate proteoglycans (HSPGs) on the surface of host hepatocytes region. The interval Lys91–Pro95 is region I; contains the proteolytic cleavage site. Tandem repeats lie at residues Pro95 to Pro103, Ala104 to Pro112, Ala113 to Pro121, Ala122 to Pro130, Ala131 to Pro139, Ala140 to Pro148, Ala149 to Pro157, Ala158 to Pro166, Ala167 to Pro175, Ala176 to Pro184, Ala185 to Pro193, Ala194 to Pro202, Ala203 to Pro211, Ala212 to Pro220, Ala221 to Pro229, Ala230 to Pro238, Ala239 to Pro247, Ala248 to Pro256, Ala257 to Ala265, and Ala266 to Ala274. Residues Pro95–Ala274 form a 20 X 9 AA tandem repeats of [PA]-G-D-R-A-[DA]-G-Q-[PA] region. Positions Gly236–Gln273 are enriched in low complexity. The segment covering Ala274–Gly283 has biased composition (gly residues). Residues Gln284–Asn293 are compositionally biased toward low complexity. Positions Lys303–Ala355 constitute a TSP type-1 domain. Intrachain disulfides connect Cys315–Cys349 and Cys319–Cys354. An O-linked (Fuc) threonine glycan is attached at Thr318. Residue Cys354 is the site of GPI-anchor amidated cysteine attachment. Positions Ala355–Asn377 are cleaved as a propeptide — removed in mature form.

The protein belongs to the plasmodium circumsporozoite protein family. During host cell invasion, proteolytically cleaved at the cell membrane in the region I by a papain-like cysteine protease of parasite origin. Cleavage is triggered by the sporozoite contact with highly sulfated heparan sulfate proteoglycans (HSPGs) present on the host hepatocyte cell surface. Cleavage exposes the TSP type-1 (TSR) domain and is required for productive invasion of host hepatocytes but not for adhesion to the host cell membrane. Cleavage is dispensable for sporozoite development in the oocyst, motility and for traversal of host and vector cells. Post-translationally, O-glycosylated; maybe by POFUT2.

It is found in the cell membrane. It localises to the cytoplasm. Essential sporozoite protein. In the mosquito vector, required for sporozoite development in the oocyst, migration through the vector hemolymph and entry into the vector salivary glands. In the vertebrate host, required for sporozoite migration through the host dermis and infection of host hepatocytes. Binds to highly sulfated heparan sulfate proteoglycans (HSPGs) on the surface of host hepatocytes. Functionally, in the vertebrate host, binds to highly sulfated heparan sulfate proteoglycans (HSPGs) on the surface of host hepatocytes and is required for sporozoite invasion of the host hepatocytes. The chain is Circumsporozoite protein from Plasmodium vivax (strain Salvador I).